A 288-amino-acid polypeptide reads, in one-letter code: UDP-3-O-acyl-N-acetylglucosamine deacetylase (288 aa).

Zn(2+)-binding residues include H79, H236, and D240. Residue H263 is the Proton donor of the active site.

It belongs to the LpxC family. The cofactor is Zn(2+).

It carries out the reaction a UDP-3-O-[(3R)-3-hydroxyacyl]-N-acetyl-alpha-D-glucosamine + H2O = a UDP-3-O-[(3R)-3-hydroxyacyl]-alpha-D-glucosamine + acetate. Its pathway is glycolipid biosynthesis; lipid IV(A) biosynthesis; lipid IV(A) from (3R)-3-hydroxytetradecanoyl-[acyl-carrier-protein] and UDP-N-acetyl-alpha-D-glucosamine: step 2/6. In terms of biological role, catalyzes the hydrolysis of UDP-3-O-myristoyl-N-acetylglucosamine to form UDP-3-O-myristoylglucosamine and acetate, the committed step in lipid A biosynthesis. This is UDP-3-O-acyl-N-acetylglucosamine deacetylase from Rickettsia felis (strain ATCC VR-1525 / URRWXCal2) (Rickettsia azadi).